A 483-amino-acid chain; its full sequence is Cobyric acid synthase (483 aa).

The GATase cobBQ-type domain occupies 248–434 (ALRVVVPVLP…LHGLFEQPSA (187 aa)). Catalysis depends on Cys-329, which acts as the Nucleophile. His-426 is an active-site residue.

The protein belongs to the CobB/CobQ family. CobQ subfamily.

Its pathway is cofactor biosynthesis; adenosylcobalamin biosynthesis. Its function is as follows. Catalyzes amidations at positions B, D, E, and G on adenosylcobyrinic A,C-diamide. NH(2) groups are provided by glutamine, and one molecule of ATP is hydrogenolyzed for each amidation. The sequence is that of Cobyric acid synthase from Ectopseudomonas mendocina (strain ymp) (Pseudomonas mendocina).